The primary structure comprises 233 residues: NSARGFDTVNEKYQECQTKMEEAEKTASEAEQEIQSLNRRIQLLEEDMERSEERLQTATEKLEEASKAADESERNRKVLENLNNASEERTDVLEKQLTEAKLIAEEADKKYDEAARKLAITEVDLERAEARLEAAEAKVLELEEELKVVGNNMKSLEISEQEASQREDSYEETIRDLTQRLKDAENRATEAERTVSKLQKEVDRLEDELLAEKERYKAISDELDQTFAELAGY.

Positions 6 to 222 (FDTVNEKYQE…KERYKAISDE (217 aa)) form a coiled coil. The disordered stretch occupies residues 48-88 (MERSEERLQTATEKLEEASKAADESERNRKVLENLNNASEE). Basic and acidic residues predominate over residues 51-79 (SEERLQTATEKLEEASKAADESERNRKVL).

It belongs to the tropomyosin family. In terms of assembly, homodimer.

Its function is as follows. Tropomyosin, in association with the troponin complex, plays a central role in the calcium dependent regulation of muscle contraction. This Magallana gigas (Pacific oyster) protein is Tropomyosin.